Reading from the N-terminus, the 449-residue chain is Packaging protein 1 (449 aa).

Positions 1–78 are disordered; the sequence is METRGRRPAA…PAKRGDMLDR (78 aa). ATP is bound at residue 171-178; the sequence is GPTGCGKS. The DNA-binding stretch occupies residues 440–449; that stretch reads RAYRARKTPK.

This sequence belongs to the adenoviridae packaging protein 1 family. Homodimer. Part of a genome packaging complex composed of packaging proteins 1, 2 and 3; this complex specifically binds to the packaging sequence on the left end of viral genomic DNA and performs packaging of the viral genome. Interacts with protein 33K.

The protein resides in the virion. Its subcellular location is the host nucleus. It localises to the host nucleoplasm. The protein localises to the host nucleolus. Component of the packaging machinery which encapsidates the viral DNA into preformed capsids and transcriptional activator of the viral major late promoter (MLP). Binds, along with packaging proteins 2 and 3, to the specific packaging sequence on the left end of viral genomic DNA and displays ATPase activity thereby providing the power stroke of the packaging machinery. The activity of packaging protein IVa2 is stimulated by protein 33K which acts as a terminase. May be the protein that pumps DNA into the capsid powered by ATP hydrolysis. Specifically binds to the 5'-CG-3' nucleotides of the repeats making up the packaging sequence. Component of the DEF-A and DEF-B transcription factors that bind downstream elements of the major late promoter (MLP), and stimulate transcription from the MLP after initiation of viral DNA replication. DEF-A is a heterodimer packaging proteins 1 and 2 and DEF-B is a homodimer of packaging protein 1. This is Packaging protein 1 from Human adenovirus C serotype 5 (HAdV-5).